A 495-amino-acid chain; its full sequence is Polybrominated aromatic compounds synthase (495 aa).

Cys-437 lines the heme pocket.

Belongs to the cytochrome P450 family. Requires heme as cofactor.

Functionally, cytochrome P450 protein involved in the biosynthesis of polybrominated aromatic organic compounds. In the presence of ferredoxin, ferredoxin reductase and NADH, catalyzes the coupling of bromophenols and bromopyrroles, forming various polybrominated biphenyls and hydroxylated polybrominated diphenyl ethers (OH-BDE). Can also mediate the heterocoupling of 3,5-dibromocatechol, forming six different compounds, including polybrominated dibenzo-p-dioxins, which are among the most toxic molecules known to man. The chain is Polybrominated aromatic compounds synthase from Marinomonas mediterranea (strain ATCC 700492 / JCM 21426 / NBRC 103028 / MMB-1).